Reading from the N-terminus, the 507-residue chain is Cytochrome P450 3A28 (507 aa).

Cysteine 442 contacts heme.

This sequence belongs to the cytochrome P450 family. It depends on heme as a cofactor.

Its subcellular location is the endoplasmic reticulum membrane. It localises to the microsome membrane. It carries out the reaction an organic molecule + reduced [NADPH--hemoprotein reductase] + O2 = an alcohol + oxidized [NADPH--hemoprotein reductase] + H2O + H(+). In terms of biological role, cytochromes P450 are a group of heme-thiolate monooxygenases. In liver microsomes, this enzyme is involved in an NADPH-dependent electron transport pathway. It oxidizes a variety of structurally unrelated compounds, including steroids, fatty acids, and xenobiotics. In Bos taurus (Bovine), this protein is Cytochrome P450 3A28 (CYP3A28).